A 690-amino-acid chain; its full sequence is Elongation factor G (690 aa).

The tr-type G domain maps to 8–283 (EDYRNFGIMA…AVVDYLPSPV (276 aa)). GTP is bound by residues 17-24 (AHIDAGKT), 81-85 (DTPGH), and 135-138 (NKMD).

It belongs to the TRAFAC class translation factor GTPase superfamily. Classic translation factor GTPase family. EF-G/EF-2 subfamily.

Its subcellular location is the cytoplasm. Functionally, catalyzes the GTP-dependent ribosomal translocation step during translation elongation. During this step, the ribosome changes from the pre-translocational (PRE) to the post-translocational (POST) state as the newly formed A-site-bound peptidyl-tRNA and P-site-bound deacylated tRNA move to the P and E sites, respectively. Catalyzes the coordinated movement of the two tRNA molecules, the mRNA and conformational changes in the ribosome. The sequence is that of Elongation factor G from Rhodopseudomonas palustris (strain BisB18).